The chain runs to 291 residues: 3-hydroxy-5-phosphonooxypentane-2,4-dione thiolase (291 aa).

The active-site Schiff-base intermediate with substrate is K203.

It belongs to the DeoC/FbaB aldolase family. Homodecamer.

It localises to the cytoplasm. The catalysed reaction is dihydroxyacetone phosphate + acetyl-CoA = 3-hydroxy-2,4-dioxopentyl phosphate + CoA. Functionally, involved in the degradation of phospho-AI-2, thereby terminating induction of the lsr operon and closing the AI-2 signaling cycle. Catalyzes the transfer of an acetyl moiety from 3-hydroxy-5-phosphonooxypentane-2,4-dione to CoA to form glycerone phosphate and acetyl-CoA. This is 3-hydroxy-5-phosphonooxypentane-2,4-dione thiolase from Escherichia coli O139:H28 (strain E24377A / ETEC).